The sequence spans 172 residues: FMN reductase (NADH) RutF 2 (172 aa).

It belongs to the non-flavoprotein flavin reductase family. RutF subfamily.

It catalyses the reaction FMNH2 + NAD(+) = FMN + NADH + 2 H(+). Functionally, catalyzes the reduction of FMN to FMNH2 which is used to reduce pyrimidine by RutA via the Rut pathway. In Methylorubrum extorquens (strain PA1) (Methylobacterium extorquens), this protein is FMN reductase (NADH) RutF 2.